A 282-amino-acid polypeptide reads, in one-letter code: Phosphate import ATP-binding protein PstB (282 aa).

The disordered stretch occupies residues Met1–Arg33. The ABC transporter domain occupies Ile36–Ile277. Gly68–Ser75 contributes to the ATP binding site.

This sequence belongs to the ABC transporter superfamily. Phosphate importer (TC 3.A.1.7) family. The complex is composed of two ATP-binding proteins (PstB), two transmembrane proteins (PstC and PstA) and a solute-binding protein (PstS).

It localises to the cell inner membrane. It catalyses the reaction phosphate(out) + ATP + H2O = ADP + 2 phosphate(in) + H(+). Its function is as follows. Part of the ABC transporter complex PstSACB involved in phosphate import. Responsible for energy coupling to the transport system. The chain is Phosphate import ATP-binding protein PstB from Paraburkholderia xenovorans (strain LB400).